Reading from the N-terminus, the 1013-residue chain is Hemoglobin-binding protein A (1013 aa).

An N-terminal signal peptide occupies residues 1 to 24 (MTNFKFSLLACSIAFALNASTAYA). A run of 8 repeats spans residues 26–29 (QPTN), 30–33 (QPTN), 34–37 (QPTN), 38–41 (QPTN), 42–45 (QPTN), 46–49 (QPTN), 50–53 (QPTN), and 54–57 (QPTN). The interval 26-57 (QPTNQPTNQPTNQPTNQPTNQPTNQPTNQPTN) is 8 X 4 AA tandem repeats of Q-P-T-N. Low complexity predominate over residues 26–58 (QPTNQPTNQPTNQPTNQPTNQPTNQPTNQPTNQ). The interval 26–61 (QPTNQPTNQPTNQPTNQPTNQPTNQPTNQPTNQDSN) is disordered. The short motif at 67–74 (EQINVSGS) is the TonB box element. In terms of domain architecture, TBDR plug spans 78–205 (SDSKTPPKIA…LGGSVIYKTK (128 aa)). Residues 213–1013 (NKDYYVSYKK…NYKMSVQFEF (801 aa)) form the TBDR beta-barrel domain. Residues 996–1013 (NRFYAPGRNYKMSVQFEF) carry the TonB C-terminal box motif.

Belongs to the TonB-dependent receptor family. Hemoglobin/haptoglobin binding protein subfamily.

The protein resides in the cell outer membrane. In terms of biological role, acts as a receptor for hemoglobin of the human host and is required for heme uptake. This Haemophilus influenzae protein is Hemoglobin-binding protein A (hgbA).